Reading from the N-terminus, the 208-residue chain is Uracil phosphoribosyltransferase (208 aa).

Residues arginine 78, arginine 103, and 130 to 138 contribute to the 5-phospho-alpha-D-ribose 1-diphosphate site; that span reads DPMLATGGS. Residues isoleucine 193 and 198 to 200 contribute to the uracil site; that span reads GDA. Aspartate 199 is a 5-phospho-alpha-D-ribose 1-diphosphate binding site.

The protein belongs to the UPRTase family. Mg(2+) serves as cofactor.

It catalyses the reaction UMP + diphosphate = 5-phospho-alpha-D-ribose 1-diphosphate + uracil. The protein operates within pyrimidine metabolism; UMP biosynthesis via salvage pathway; UMP from uracil: step 1/1. With respect to regulation, allosterically activated by GTP. Functionally, catalyzes the conversion of uracil and 5-phospho-alpha-D-ribose 1-diphosphate (PRPP) to UMP and diphosphate. This Neisseria gonorrhoeae (strain ATCC 700825 / FA 1090) protein is Uracil phosphoribosyltransferase.